We begin with the raw amino-acid sequence, 2293 residues long: Protein Ycf2 (2293 aa).

1642-1649 provides a ligand contact to ATP; that stretch reads GSIGTGRS.

Belongs to the Ycf2 family.

It is found in the plastid. Its subcellular location is the chloroplast stroma. Probable ATPase of unknown function. Its presence in a non-photosynthetic plant (Epifagus virginiana) and experiments in tobacco indicate that it has an essential function which is probably not related to photosynthesis. The protein is Protein Ycf2 of Platanus occidentalis (Sycamore).